Here is a 76-residue protein sequence, read N- to C-terminus: Small ribosomal subunit protein bS18 (76 aa).

Belongs to the bacterial ribosomal protein bS18 family. In terms of assembly, part of the 30S ribosomal subunit. Forms a tight heterodimer with protein bS6.

In terms of biological role, binds as a heterodimer with protein bS6 to the central domain of the 16S rRNA, where it helps stabilize the platform of the 30S subunit. This Xanthomonas euvesicatoria pv. vesicatoria (strain 85-10) (Xanthomonas campestris pv. vesicatoria) protein is Small ribosomal subunit protein bS18.